The chain runs to 313 residues: Porphobilinogen deaminase (313 aa).

The residue at position 242 (Cys-242) is an S-(dipyrrolylmethanemethyl)cysteine.

It belongs to the HMBS family. Monomer. It depends on dipyrromethane as a cofactor.

The enzyme catalyses 4 porphobilinogen + H2O = hydroxymethylbilane + 4 NH4(+). The protein operates within porphyrin-containing compound metabolism; protoporphyrin-IX biosynthesis; coproporphyrinogen-III from 5-aminolevulinate: step 2/4. Tetrapolymerization of the monopyrrole PBG into the hydroxymethylbilane pre-uroporphyrinogen in several discrete steps. The protein is Porphobilinogen deaminase of Yersinia pseudotuberculosis serotype IB (strain PB1/+).